Here is a 161-residue protein sequence, read N- to C-terminus: Nucleotide-binding protein PFL_4775 (161 aa).

This sequence belongs to the YajQ family.

Nucleotide-binding protein. The chain is Nucleotide-binding protein PFL_4775 from Pseudomonas fluorescens (strain ATCC BAA-477 / NRRL B-23932 / Pf-5).